Consider the following 187-residue polypeptide: UPF0301 protein VP2612 (187 aa).

Belongs to the UPF0301 (AlgH) family.

The protein is UPF0301 protein VP2612 of Vibrio parahaemolyticus serotype O3:K6 (strain RIMD 2210633).